The chain runs to 283 residues: GTPase Era (283 aa).

One can recognise an Era-type G domain in the interval 7 to 175; sequence YCGHVIIVGK…KNIIKSYLPE (169 aa). The interval 15–22 is G1; it reads GKANVGKS. 15 to 22 serves as a coordination point for GTP; it reads GKANVGKS. The tract at residues 41 to 45 is G2; that stretch reads NTTQS. The interval 62–65 is G3; the sequence is DTPG. GTP contacts are provided by residues 62-66 and 124-127; these read DTPGV and NKID. A G4 region spans residues 124 to 127; it reads NKID. Positions 154 to 156 are G5; sequence ISA. The KH type-2 domain maps to 198–283; it reads IREQLILFLG…HLVLWVKDKN (86 aa).

Belongs to the TRAFAC class TrmE-Era-EngA-EngB-Septin-like GTPase superfamily. Era GTPase family. Monomer.

Its subcellular location is the cytoplasm. The protein resides in the cell membrane. Its function is as follows. An essential GTPase that binds both GDP and GTP, with rapid nucleotide exchange. Plays a role in 16S rRNA processing and 30S ribosomal subunit biogenesis and possibly also in cell cycle regulation and energy metabolism. This Buchnera aphidicola subsp. Acyrthosiphon pisum (strain APS) (Acyrthosiphon pisum symbiotic bacterium) protein is GTPase Era.